The primary structure comprises 711 residues: Ribosomal RNA large subunit methyltransferase K/L (711 aa).

The THUMP domain occupies 42–153 (DAQRAVLWSR…KGRATISVDL (112 aa)).

This sequence belongs to the methyltransferase superfamily. RlmKL family.

Its subcellular location is the cytoplasm. It carries out the reaction guanosine(2445) in 23S rRNA + S-adenosyl-L-methionine = N(2)-methylguanosine(2445) in 23S rRNA + S-adenosyl-L-homocysteine + H(+). It catalyses the reaction guanosine(2069) in 23S rRNA + S-adenosyl-L-methionine = N(2)-methylguanosine(2069) in 23S rRNA + S-adenosyl-L-homocysteine + H(+). Specifically methylates the guanine in position 2445 (m2G2445) and the guanine in position 2069 (m7G2069) of 23S rRNA. This Xanthomonas oryzae pv. oryzae (strain MAFF 311018) protein is Ribosomal RNA large subunit methyltransferase K/L.